An 84-amino-acid chain; its full sequence is Cell division topological specificity factor (84 aa).

It belongs to the MinE family.

Prevents the cell division inhibition by proteins MinC and MinD at internal division sites while permitting inhibition at polar sites. This ensures cell division at the proper site by restricting the formation of a division septum at the midpoint of the long axis of the cell. The sequence is that of Cell division topological specificity factor from Cupriavidus necator (strain ATCC 17699 / DSM 428 / KCTC 22496 / NCIMB 10442 / H16 / Stanier 337) (Ralstonia eutropha).